Here is a 318-residue protein sequence, read N- to C-terminus: Transaldolase (318 aa).

K126 (schiff-base intermediate with substrate) is an active-site residue.

This sequence belongs to the transaldolase family. Type 1 subfamily. As to quaternary structure, homodimer.

It localises to the cytoplasm. The enzyme catalyses D-sedoheptulose 7-phosphate + D-glyceraldehyde 3-phosphate = D-erythrose 4-phosphate + beta-D-fructose 6-phosphate. Its pathway is carbohydrate degradation; pentose phosphate pathway; D-glyceraldehyde 3-phosphate and beta-D-fructose 6-phosphate from D-ribose 5-phosphate and D-xylulose 5-phosphate (non-oxidative stage): step 2/3. Transaldolase is important for the balance of metabolites in the pentose-phosphate pathway. In Variovorax paradoxus (strain S110), this protein is Transaldolase.